A 1429-amino-acid polypeptide reads, in one-letter code: Autophagy-related protein 11 (1429 aa).

Coiled coils occupy residues 540–579 (GDDD…QSQA), 616–808 (EGID…LDDH), 842–985 (TLVE…HMNS), and 1106–1135 (RRIK…LQKD). The interval 574–622 (HRQSQASRPGNLFQPQGSQQRERVNSASSVRSSRFDDRRRSSEGIDPLM) is disordered. Residues 575-592 (RQSQASRPGNLFQPQGSQ) show a composition bias toward polar residues. The segment covering 606 to 616 (SRFDDRRRSSE) has biased composition (basic and acidic residues). 2 disordered regions span residues 1205 to 1224 (SKSL…ENDN) and 1333 to 1405 (RAHN…PTRR). 2 stretches are compositionally biased toward polar residues: residues 1206 to 1215 (KSLQPSSETE) and 1333 to 1362 (RAHN…GQKN). A compositionally biased stretch (basic and acidic residues) spans 1384-1398 (KADEQPRSVVQREDS).

This sequence belongs to the ATG11 family. In terms of assembly, homodimer and potential homooligomers. Interacts with ATG1 kinase and the ATG19 and ATG34 cargo protein transporters. Interacts with ATG9, ATG17 and ATG20.

The protein localises to the preautophagosomal structure membrane. Its subcellular location is the vacuole membrane. Its function is as follows. Involved in cytoplasm to vacuole transport (Cvt), pexophagy, mitophagy and nucleophagy. Recruits mitochondria for their selective degradation via autophagy (mitophagy) during starvation, through its interaction with ATG32. Works as scaffold proteins that recruit ATG proteins to the pre-autophagosome (PAS), the site of vesicle/autophagosome formation. Required for ATG9 anterograde transport from the mitochondria to the PAS. Also recruits the ATG19-prAPE1 complex to the PAS. Required for the Cvt vesicles completion. Autophagy is required for proper vegetative growth, asexual/sexual reproduction, and full virulence. Autophagy is particularly involved in the biosynthesis of deoxynivalenol (DON), an important virulence determinant. The protein is Autophagy-related protein 11 of Gibberella zeae (strain ATCC MYA-4620 / CBS 123657 / FGSC 9075 / NRRL 31084 / PH-1) (Wheat head blight fungus).